We begin with the raw amino-acid sequence, 107 residues long: Nucleoid-associated protein YaaK (107 aa).

The segment at 1-24 (MRGGMGNMQKMMKQMQKMQKDMAK) is disordered. A compositionally biased stretch (low complexity) spans 8–17 (MQKMMKQMQK).

Belongs to the YbaB/EbfC family. As to quaternary structure, homodimer.

The protein resides in the cytoplasm. It is found in the nucleoid. Functionally, binds to DNA and alters its conformation. May be involved in regulation of gene expression, nucleoid organization and DNA protection. This Bacillus subtilis (strain 168) protein is Nucleoid-associated protein YaaK (yaaK).